A 670-amino-acid polypeptide reads, in one-letter code: Transcription factor vib-1 (670 aa).

The NDT80 DNA-binding region spans 106–341 (TEMVQDLRDD…RSPRNFQARK (236 aa)). 2 stretches are compositionally biased toward polar residues: residues 394 to 438 (FTSA…TTSM) and 553 to 568 (LGNS…QHHP). Disordered regions lie at residues 394–457 (FTSA…SYTA) and 496–670 (SAPP…WNAT). The span at 592-605 (ASAPASAPTSAAPP) shows a compositional bias: low complexity. A compositionally biased stretch (polar residues) spans 611-631 (PSQSWTSTAGEGQTSSYTNGG).

It localises to the nucleus. The protein resides in the cytoplasm. Functionally, transcription factor that acts as a positive regulator of nonrepressible acid phosphatase activity. Is a major regulator of responses to nitrogen and carbon starvation and is essential for the expression of genes involved in vegetative incompatibility (like pin-c, het-6, and tol). Vegetative incompatibility is a non-self-recognition system ubiquitous in filamentous fungi which results in programmed cell death. This Neurospora crassa (strain ATCC 24698 / 74-OR23-1A / CBS 708.71 / DSM 1257 / FGSC 987) protein is Transcription factor vib-1 (vib-1).